The following is a 424-amino-acid chain: DNA primase DnaG (424 aa).

The Toprim domain occupies 166 to 241 (DTIIIVEGRA…KVDFIARAPE (76 aa)). 3 residues coordinate Mg(2+): glutamate 172, aspartate 215, and aspartate 217.

This sequence belongs to the archaeal DnaG primase family. Forms a ternary complex with MCM helicase and DNA. Component of the archaeal exosome complex. The cofactor is Mg(2+).

It carries out the reaction ssDNA + n NTP = ssDNA/pppN(pN)n-1 hybrid + (n-1) diphosphate.. Its function is as follows. RNA polymerase that catalyzes the synthesis of short RNA molecules used as primers for DNA polymerase during DNA replication. Also part of the exosome, which is a complex involved in RNA degradation. Acts as a poly(A)-binding protein that enhances the interaction between heteromeric, adenine-rich transcripts and the exosome. The protein is DNA primase DnaG of Staphylothermus marinus (strain ATCC 43588 / DSM 3639 / JCM 9404 / F1).